The chain runs to 319 residues: Ribonuclease Z (319 aa).

Residues His-62, His-64, Asp-66, His-67, His-145, Asp-215, and His-273 each contribute to the Zn(2+) site. Asp-66 acts as the Proton acceptor in catalysis.

The protein belongs to the RNase Z family. In terms of assembly, homodimer. The cofactor is Zn(2+).

The catalysed reaction is Endonucleolytic cleavage of RNA, removing extra 3' nucleotides from tRNA precursor, generating 3' termini of tRNAs. A 3'-hydroxy group is left at the tRNA terminus and a 5'-phosphoryl group is left at the trailer molecule.. In terms of biological role, zinc phosphodiesterase, which displays some tRNA 3'-processing endonuclease activity. Probably involved in tRNA maturation, by removing a 3'-trailer from precursor tRNA. This is Ribonuclease Z from Borrelia hermsii (strain HS1 / DAH).